We begin with the raw amino-acid sequence, 291 residues long: Acetyl-coenzyme A carboxylase carboxyl transferase subunit beta (291 aa).

The disordered stretch occupies residues 1-23 (MSWLSKLMPSGIRTDNTPSKKRS). The CoA carboxyltransferase N-terminal domain occupies 28 to 291 (LWEKCSNCGS…LGRQPAPEVA (264 aa)). Positions 32, 35, 51, and 54 each coordinate Zn(2+). Residues 32 to 54 (CSNCGSALYRPELEENLEVCPKC) form a C4-type zinc finger.

This sequence belongs to the AccD/PCCB family. As to quaternary structure, acetyl-CoA carboxylase is a heterohexamer composed of biotin carboxyl carrier protein (AccB), biotin carboxylase (AccC) and two subunits each of ACCase subunit alpha (AccA) and ACCase subunit beta (AccD). The cofactor is Zn(2+).

Its subcellular location is the cytoplasm. The enzyme catalyses N(6)-carboxybiotinyl-L-lysyl-[protein] + acetyl-CoA = N(6)-biotinyl-L-lysyl-[protein] + malonyl-CoA. It participates in lipid metabolism; malonyl-CoA biosynthesis; malonyl-CoA from acetyl-CoA: step 1/1. Its function is as follows. Component of the acetyl coenzyme A carboxylase (ACC) complex. Biotin carboxylase (BC) catalyzes the carboxylation of biotin on its carrier protein (BCCP) and then the CO(2) group is transferred by the transcarboxylase to acetyl-CoA to form malonyl-CoA. The protein is Acetyl-coenzyme A carboxylase carboxyl transferase subunit beta of Stenotrophomonas maltophilia (strain K279a).